The following is a 103-amino-acid chain: Large ribosomal subunit protein bL21 (103 aa).

Belongs to the bacterial ribosomal protein bL21 family. In terms of assembly, part of the 50S ribosomal subunit. Contacts protein L20.

Functionally, this protein binds to 23S rRNA in the presence of protein L20. In Heliobacterium modesticaldum (strain ATCC 51547 / Ice1), this protein is Large ribosomal subunit protein bL21.